The following is a 440-amino-acid chain: Chromosomal replication initiator protein DnaA (440 aa).

Residues 1–69 (MKERILQEIK…VKVVLGNDAT (69 aa)) form a domain I, interacts with DnaA modulators region. The domain II stretch occupies residues 69-96 (TFEITYEAFEPHSSYSEPLVKKRAVLLT). The segment at 97 to 313 (PLNPDYTFEN…GAIIKLLVYK (217 aa)) is domain III, AAA+ region. ADP contacts are provided by valine 108, asparagine 113, glycine 140, leucine 141, glycine 142, lysine 143, threonine 144, histidine 145, and arginine 300. Glycine 140 is a binding site for ATP. Residues glycine 142, lysine 143, and threonine 144 each contribute to the ATP site. A Mg(2+)-binding site is contributed by threonine 144. The segment at 314–440 (ETTGKEVDLK…GEISRRALSG (127 aa)) is domain IV, binds dsDNA.

Belongs to the DnaA family. Oligomerizes as a right-handed, spiral filament on DNA at oriC.

The protein localises to the cytoplasm. Its function is as follows. Plays an essential role in the initiation and regulation of chromosomal replication. ATP-DnaA binds to the origin of replication (oriC) to initiate formation of the DNA replication initiation complex once per cell cycle. Binds the DnaA box (a 9 base pair repeat at the origin) and separates the double-stranded (ds)DNA. Forms a right-handed helical filament on oriC DNA; dsDNA binds to the exterior of the filament while single-stranded (ss)DNA is stabiized in the filament's interior. The ATP-DnaA-oriC complex binds and stabilizes one strand of the AT-rich DNA unwinding element (DUE), permitting loading of DNA polymerase. After initiation quickly degrades to an ADP-DnaA complex that is not apt for DNA replication. Binds acidic phospholipids. In terms of biological role, the DnaA box consensus is 5'-[ATC][AT]AC[CT]TACCA[CT][CTA]-3' in this bacterium. Mutagenesis of residues that line the central pore blocks dsDNA separation. The polypeptide is Chromosomal replication initiator protein DnaA (Thermotoga maritima (strain ATCC 43589 / DSM 3109 / JCM 10099 / NBRC 100826 / MSB8)).